The sequence spans 470 residues: ATP synthase subunit beta (470 aa).

Glycine 157–threonine 164 contacts ATP.

The protein belongs to the ATPase alpha/beta chains family. In terms of assembly, F-type ATPases have 2 components, CF(1) - the catalytic core - and CF(0) - the membrane proton channel. CF(1) has five subunits: alpha(3), beta(3), gamma(1), delta(1), epsilon(1). CF(0) has three main subunits: a(1), b(2) and c(9-12). The alpha and beta chains form an alternating ring which encloses part of the gamma chain. CF(1) is attached to CF(0) by a central stalk formed by the gamma and epsilon chains, while a peripheral stalk is formed by the delta and b chains.

It is found in the cell inner membrane. It carries out the reaction ATP + H2O + 4 H(+)(in) = ADP + phosphate + 5 H(+)(out). Functionally, produces ATP from ADP in the presence of a proton gradient across the membrane. The catalytic sites are hosted primarily by the beta subunits. This is ATP synthase subunit beta from Geotalea uraniireducens (strain Rf4) (Geobacter uraniireducens).